The primary structure comprises 484 residues: Cobyric acid synthase (484 aa).

Residues glutamine 249–threonine 438 enclose the GATase cobBQ-type domain. Catalysis depends on cysteine 330, which acts as the Nucleophile. The active site involves histidine 430.

Belongs to the CobB/CobQ family. CobQ subfamily.

Its pathway is cofactor biosynthesis; adenosylcobalamin biosynthesis. Catalyzes amidations at positions B, D, E, and G on adenosylcobyrinic A,C-diamide. NH(2) groups are provided by glutamine, and one molecule of ATP is hydrogenolyzed for each amidation. The polypeptide is Cobyric acid synthase (Vibrio cholerae serotype O1 (strain ATCC 39541 / Classical Ogawa 395 / O395)).